Consider the following 427-residue polypeptide: UPF0229 protein KPN78578_11640 (427 aa).

The segment at 72 to 109 (RNRVHPGNDHFVQNDRIERPQGGGGGGGSGQGQASADG) is disordered. Residues 77 to 90 (PGNDHFVQNDRIER) are compositionally biased toward basic and acidic residues. A compositionally biased stretch (gly residues) spans 92–102 (QGGGGGGGSGQ).

The protein belongs to the UPF0229 family.

This Klebsiella pneumoniae subsp. pneumoniae (strain ATCC 700721 / MGH 78578) protein is UPF0229 protein KPN78578_11640.